A 369-amino-acid chain; its full sequence is Phenylalanine--tRNA ligase alpha subunit (369 aa).

E269 is a binding site for Mg(2+).

This sequence belongs to the class-II aminoacyl-tRNA synthetase family. Phe-tRNA synthetase alpha subunit type 1 subfamily. Tetramer of two alpha and two beta subunits. Mg(2+) is required as a cofactor.

It localises to the cytoplasm. It carries out the reaction tRNA(Phe) + L-phenylalanine + ATP = L-phenylalanyl-tRNA(Phe) + AMP + diphosphate + H(+). This Brucella abortus (strain 2308) protein is Phenylalanine--tRNA ligase alpha subunit.